We begin with the raw amino-acid sequence, 380 residues long: 1-deoxy-D-xylulose 5-phosphate reductoisomerase 2 (380 aa).

NADPH is bound by residues Ser10, Gly11, Ser12, Ile13, Gly36, Lys37, Asn38, and Asn120. Residue Lys121 participates in 1-deoxy-D-xylulose 5-phosphate binding. Glu122 provides a ligand contact to NADPH. Residue Asp146 participates in Mn(2+) binding. The 1-deoxy-D-xylulose 5-phosphate site is built by Ser147, Glu148, Ser172, and His195. Mn(2+) is bound at residue Glu148. Gly201 serves as a coordination point for NADPH. The 1-deoxy-D-xylulose 5-phosphate site is built by Ser208, Asn213, Lys214, and Glu217. Residue Glu217 coordinates Mn(2+).

Belongs to the DXR family. Mg(2+) serves as cofactor. It depends on Mn(2+) as a cofactor.

The enzyme catalyses 2-C-methyl-D-erythritol 4-phosphate + NADP(+) = 1-deoxy-D-xylulose 5-phosphate + NADPH + H(+). Its pathway is isoprenoid biosynthesis; isopentenyl diphosphate biosynthesis via DXP pathway; isopentenyl diphosphate from 1-deoxy-D-xylulose 5-phosphate: step 1/6. Functionally, catalyzes the NADPH-dependent rearrangement and reduction of 1-deoxy-D-xylulose-5-phosphate (DXP) to 2-C-methyl-D-erythritol 4-phosphate (MEP). This is 1-deoxy-D-xylulose 5-phosphate reductoisomerase 2 from Bacillus anthracis.